Here is a 515-residue protein sequence, read N- to C-terminus: 1-pyrroline-5-carboxylate dehydrogenase 1 (515 aa).

Catalysis depends on residues E286 and C320.

It belongs to the aldehyde dehydrogenase family. RocA subfamily.

It carries out the reaction L-glutamate 5-semialdehyde + NAD(+) + H2O = L-glutamate + NADH + 2 H(+). It functions in the pathway amino-acid degradation; L-proline degradation into L-glutamate; L-glutamate from L-proline: step 2/2. This chain is 1-pyrroline-5-carboxylate dehydrogenase 1 (rocA1), found in Halalkalibacterium halodurans (strain ATCC BAA-125 / DSM 18197 / FERM 7344 / JCM 9153 / C-125) (Bacillus halodurans).